The primary structure comprises 1248 residues: Reverse gyrase 1 (1248 aa).

The RG N-terminal-type zinc-finger motif lies at 7 to 44; that stretch reads IPPSIYLFSCPNCGRSISTYRLLLGSVCNICLEEDKEY. Zn(2+)-binding residues include Cys-16, Cys-19, Cys-34, and Cys-37. ATP is bound by residues Gln-92 and 109–116; that span reads APPGLGKT. The 167-residue stretch at 96–262 folds into the Helicase ATP-binding domain; that stretch reads IYRLLSGESF…KKYRENTQKN (167 aa). Residues 219–222 carry the DEAD box motif; sequence DDVD. Positions 621–1248 are topoisomerase I; the sequence is QKVKTVLLVV…QVYEEINEIR (628 aa). The 165-residue stretch at 625–789 folds into the Toprim domain; the sequence is TVLLVVESPN…NIRRAEFHEV (165 aa). Glu-631 contacts Mg(2+). The segment at 706–735 adopts an RG C-terminal-type; atypical zinc-finger fold; that stretch reads IKKCENNHQFTDFFESNKCPRCMTTKVRYD. Cys-709, His-713, Cys-724, and Cys-727 together coordinate Zn(2+). Residue Asp-758 coordinates Mg(2+). In terms of domain architecture, Topo IA-type catalytic spans 805 to 1248; the sequence is NVNLVKSQLV…QVYEEINEIR (444 aa). The O-(5'-phospho-DNA)-tyrosine intermediate role is filled by Tyr-965.

In the N-terminal section; belongs to the DEAD box helicase family. DDVD subfamily. This sequence in the C-terminal section; belongs to the type IA topoisomerase family. As to quaternary structure, monomer. Requires Zn(2+) as cofactor. Mg(2+) serves as cofactor. The N-terminus is blocked.

It localises to the cytoplasm. The enzyme catalyses ATP + H2O = ADP + phosphate + H(+). In terms of biological role, modifies the topological state of DNA by introducing positive supercoils in an ATP-dependent process. Increases the linking number in steps of +1. Has a DNA-stimulated ATPase activity; closed circular ssDNA stimulates ATPase much better than dsDNA although negative supercoiled, positive supercoiled and relaxed dsDNA all stimulate ATPase activity. All NTPs permit topoisomerization (relaxation) of negatively supercoiled dsDNA without nucleotide hydrolysis. It transiently cleaves a single DNA strand and remains covalently bound to the 5' DNA end. Acts via a tyrosine residue. Reverse gyrase binds and unwinds DNA independently of ATP binding and DNA cleavage. May be involved in rewinding the DNA strands in the regions of the chromosome that have opened up to allow transcription or replication, probably acts via ssDNA regions of the chromosome. This Sulfolobus acidocaldarius (strain ATCC 33909 / DSM 639 / JCM 8929 / NBRC 15157 / NCIMB 11770) protein is Reverse gyrase 1.